The sequence spans 301 residues: Acetaldehyde dehydrogenase (301 aa).

The Acyl-thioester intermediate role is filled by Cys-130. NAD(+) contacts are provided by residues 161-169 and Asn-272; that span reads SVGPGTRRN.

Belongs to the acetaldehyde dehydrogenase family.

The catalysed reaction is acetaldehyde + NAD(+) + CoA = acetyl-CoA + NADH + H(+). The chain is Acetaldehyde dehydrogenase (mhpF) from Cupriavidus taiwanensis (strain DSM 17343 / BCRC 17206 / CCUG 44338 / CIP 107171 / LMG 19424 / R1) (Ralstonia taiwanensis (strain LMG 19424)).